The sequence spans 492 residues: uncharacterized protein (492 aa).

The protein belongs to the FGGY kinase family.

This is an uncharacterized protein from Escherichia coli (strain K12).